The chain runs to 875 residues: Translation initiation factor IF-2 (875 aa).

3 disordered regions span residues 1-20 (MSDS…LKTA), 47-102 (LMGR…LREA), and 126-246 (EEER…DRRG). Residues 54-66 (AAPTAAPAAAATP) show a composition bias toward low complexity. The span at 67-85 (APTPVAPPPPPPPPPPPPS) shows a compositional bias: pro residues. Basic and acidic residues-rich tracts occupy residues 88–102 (RETR…LREA) and 126–140 (EEER…RAEA). 2 stretches are compositionally biased toward low complexity: residues 141–195 (EAAA…PAAP) and 202–221 (PAAP…PAAP). A compositionally biased stretch (basic and acidic residues) spans 223–246 (KRPELAAKKPAHPQRDRKTEDRRG). The tr-type G domain maps to 374-544 (ARPPVVTIMG…LLQAELLELK (171 aa)). A G1 region spans residues 383–390 (GHVDHGKT). GTP is bound at residue 383 to 390 (GHVDHGKT). The G2 stretch occupies residues 408-412 (GITQH). Positions 430 to 433 (DTPG) are G3. Residues 430 to 434 (DTPGH) and 484 to 487 (TKAD) contribute to the GTP site. The segment at 484–487 (TKAD) is G4. The G5 stretch occupies residues 520-522 (SAK).

The protein belongs to the TRAFAC class translation factor GTPase superfamily. Classic translation factor GTPase family. IF-2 subfamily.

The protein resides in the cytoplasm. Its function is as follows. One of the essential components for the initiation of protein synthesis. Protects formylmethionyl-tRNA from spontaneous hydrolysis and promotes its binding to the 30S ribosomal subunits. Also involved in the hydrolysis of GTP during the formation of the 70S ribosomal complex. The polypeptide is Translation initiation factor IF-2 (Novosphingobium aromaticivorans (strain ATCC 700278 / DSM 12444 / CCUG 56034 / CIP 105152 / NBRC 16084 / F199)).